Consider the following 319-residue polypeptide: Ornithine carbamoyltransferase (319 aa).

Residues 63–66 (STRT), Q90, R114, and 141–144 (HPCQ) each bind carbamoyl phosphate. Residues N172, D236, and 240-241 (SM) contribute to the L-ornithine site. Carbamoyl phosphate-binding positions include 276-277 (CL) and R304.

It belongs to the aspartate/ornithine carbamoyltransferase superfamily. OTCase family.

The protein resides in the cytoplasm. The enzyme catalyses carbamoyl phosphate + L-ornithine = L-citrulline + phosphate + H(+). The protein operates within amino-acid biosynthesis; L-arginine biosynthesis; L-arginine from L-ornithine and carbamoyl phosphate: step 1/3. Its function is as follows. Reversibly catalyzes the transfer of the carbamoyl group from carbamoyl phosphate (CP) to the N(epsilon) atom of ornithine (ORN) to produce L-citrulline. This chain is Ornithine carbamoyltransferase, found in Halalkalibacterium halodurans (strain ATCC BAA-125 / DSM 18197 / FERM 7344 / JCM 9153 / C-125) (Bacillus halodurans).